Reading from the N-terminus, the 467-residue chain is Spermatogenesis- and oogenesis-specific basic helix-loop-helix-containing protein 2 (467 aa).

The bHLH domain maps to 200-251 (QASFLHSTKEKLRRERIKSCCEQLRTLLPYVKGRKSDVASVIEATVDYVKQV). Residues 443 to 453 (ASASDHQASQP) are compositionally biased toward low complexity. Residues 443 to 467 (ASASDHQASQPPALPSPQPHDSSYF) form a disordered region.

In terms of assembly, forms both hetero- and homodimers with SOHLH1. As to expression, preferentially expressed in the adult ovary and testis. Expressed in the majority of spermatogonia in adult animals, but not in the most undifferentiated spermatogonial population.

It localises to the nucleus. Its subcellular location is the cytoplasm. In terms of biological role, transcription regulator of both male and female germline differentiation. Suppresses genes involved in spermatogonial stem cells maintenance, and induces genes important for spermatogonial differentiation. Coordinates oocyte differentiation without affecting meiosis I. This is Spermatogenesis- and oogenesis-specific basic helix-loop-helix-containing protein 2 (Sohlh2) from Mus musculus (Mouse).